The sequence spans 484 residues: SPI-2 type 3 secretion system translocon protein SctE (484 aa).

2 consecutive transmembrane segments (helical) span residues Phe-85–Phe-105 and Gly-152–Leu-172. 2 coiled-coil regions span residues Asn-107 to Gly-152 and Asn-413 to Gly-457.

It belongs to the SctE/SipB/YopB family. The core secretion machinery of the T3SS is composed of approximately 20 different proteins, including cytoplasmic components, a base, an export apparatus and a needle. This subunit is involved in the formation of a pore, called the translocon, in host membrane. May form a complex with SseB and SseD/SctB2. SseB is required for correct localization of SseC/SctE2 on the bacterial cell surface.

Its subcellular location is the secreted. It is found in the cell surface. It localises to the host membrane. Component of the type III secretion system 2 (SPI-2 T3SS), also called injectisome, which is used to inject bacterial effector proteins into eukaryotic host cells. SseC/SctE2 and SseD/SctB2 are inserted into the host membrane where they form a pore and allow the translocation of effector proteins into the cytosol of target cells. In terms of biological role, required for the translocation of SPI-2 effector proteins. Required for systemic Salmonella infection of the mouse. Essential for SpvB-induced actin depolymerization in the host cell cytoplasm. This is SPI-2 type 3 secretion system translocon protein SctE from Salmonella typhimurium (strain LT2 / SGSC1412 / ATCC 700720).